The sequence spans 320 residues: Lipoyl synthase (320 aa).

Cys67, Cys72, Cys78, Cys93, Cys97, Cys100, and Ser307 together coordinate [4Fe-4S] cluster. The region spanning 79-296 is the Radical SAM core domain; sequence FNHGTATFMI…RTKAEVMGFE (218 aa).

This sequence belongs to the radical SAM superfamily. Lipoyl synthase family. It depends on [4Fe-4S] cluster as a cofactor.

The protein localises to the cytoplasm. The enzyme catalyses [[Fe-S] cluster scaffold protein carrying a second [4Fe-4S](2+) cluster] + N(6)-octanoyl-L-lysyl-[protein] + 2 oxidized [2Fe-2S]-[ferredoxin] + 2 S-adenosyl-L-methionine + 4 H(+) = [[Fe-S] cluster scaffold protein] + N(6)-[(R)-dihydrolipoyl]-L-lysyl-[protein] + 4 Fe(3+) + 2 hydrogen sulfide + 2 5'-deoxyadenosine + 2 L-methionine + 2 reduced [2Fe-2S]-[ferredoxin]. It functions in the pathway protein modification; protein lipoylation via endogenous pathway; protein N(6)-(lipoyl)lysine from octanoyl-[acyl-carrier-protein]: step 2/2. Functionally, catalyzes the radical-mediated insertion of two sulfur atoms into the C-6 and C-8 positions of the octanoyl moiety bound to the lipoyl domains of lipoate-dependent enzymes, thereby converting the octanoylated domains into lipoylated derivatives. This chain is Lipoyl synthase, found in Mannheimia succiniciproducens (strain KCTC 0769BP / MBEL55E).